Consider the following 257-residue polypeptide: UPF0246 protein BF4021 (257 aa).

This sequence belongs to the UPF0246 family.

The chain is UPF0246 protein BF4021 from Bacteroides fragilis (strain YCH46).